Here is a 44-residue protein sequence, read N- to C-terminus: pyr operon leader peptide (44 aa).

This Shigella flexneri protein is pyr operon leader peptide (pyrL).